The following is a 662-amino-acid chain: Eukaryotic peptide chain release factor GTP-binding subunit (662 aa).

Residues methionine 1–aspartate 220 are disordered. The segment covering alanine 26–proline 40 has biased composition (low complexity). The segment covering tyrosine 62–threonine 89 has biased composition (polar residues). Residues aspartate 91–lysine 102 show a composition bias toward basic and acidic residues. Polar residues predominate over residues glycine 122 to isoleucine 134. Residues threonine 141 to threonine 158 are compositionally biased toward low complexity. Threonine 182 bears the Phosphothreonine mark. The span at alanine 192–threonine 213 shows a compositional bias: low complexity. One can recognise a tr-type G domain in the interval lysine 236–lysine 464. Residues glycine 245–serine 252 are G1. Residue glycine 245 to serine 252 coordinates GTP. The G2 stretch occupies residues glycine 301–glutamate 305. The interval aspartate 322–glycine 325 is G3. GTP-binding positions include asparagine 384–aspartate 387 and alanine 428–tyrosine 429. The segment at asparagine 384–aspartate 387 is G4. The G5 stretch occupies residues serine 427–tyrosine 429. Serine 539 is subject to Phosphoserine.

It belongs to the TRAFAC class translation factor GTPase superfamily. Classic translation factor GTPase family. ERF3 subfamily. As to quaternary structure, component of the eRF1-eRF3-GTP ternary complex, composed of sup45/eRF1, sup35/eRF3 and GTP.

It localises to the cytoplasm. It carries out the reaction GTP + H2O = GDP + phosphate + H(+). Functionally, GTPase component of the eRF1-eRF3-GTP ternary complex, a ternary complex that mediates translation termination in response to the termination codons. Sup35/eRF3 mediates sup45/ERF1 delivery to stop codons: The eRF1-eRF3-GTP complex binds to a stop codon in the ribosomal A-site. GTP hydrolysis by sup35/eRF3 induces a conformational change that leads to its dissociation, permitting sup45/eRF1 to accommodate fully in the A-site. The sequence is that of Eukaryotic peptide chain release factor GTP-binding subunit (sup35) from Schizosaccharomyces pombe (strain 972 / ATCC 24843) (Fission yeast).